The following is a 568-amino-acid chain: Phosphoprotein (568 aa).

The disordered stretch occupies residues 1-23; sequence MDQDALISKEDSEVEREASGGRE. A compositionally biased stretch (basic and acidic residues) spans 7-20; sequence ISKEDSEVEREASG. The N0 binding stretch occupies residues 33–41; the sequence is DAVLSSEPT. Positions 54–317 are disordered; that stretch reads INTLQRPGST…SPETDATKKG (264 aa). 3 stretches are compositionally biased toward basic and acidic residues: residues 99-110, 150-168, and 175-193; these read AEAHARNVDKQN, GAED…RGED, and EEIR…RADN. A phosphoserine; by host mark is found at serine 249, serine 257, and serine 260. Residues 344 to 411 form a multimerization region; it reads FESSRDASYV…SFRDIYKRFS (68 aa). Positions 364 to 429 form a coiled coil; sequence YAEMAFNVCG…LLMSNLSTLH (66 aa). Positions 412–445 are l protein binding; it reads EYQKEQNSLLMSNLSTLHIITDRGGKTDNPDSPT. The segment at 433–462 is disordered; the sequence is DRGGKTDNPDSPTRSPSVFAKTKENKTKAT. A phosphoserine; by host mark is found at serine 447 and serine 449. A compositionally biased stretch (basic and acidic residues) spans 453-462; sequence KTKENKTKAT. The segment at 479 to 568 is interaction with the nucleocapsid (N-RNA); that stretch reads DLLREDEFRE…VEEDIESLTN (90 aa).

This sequence belongs to the respirovirus P protein family. In terms of assembly, homotetramer. Interacts (via multimerization domain) with polymerase L; this interaction forms the polymerase complex. Interacts (via N-terminus) with N0; this interaction allows P to chaperon N0 before encapsidation and form the N-P complex. Interacts (via C-terminus) with N-RNA template; this interaction positions the polymerase on the template. In terms of processing, phosphorylated by PKC/PRKCZ, and other unknown kinases. Phosphorylation is necessary for viral transcription and replication. The N-terminus contains the majority of phosphorylated sites. Ser-249 is the major site of phosphorylation, but is not necessary for most functions.

It is found in the host cytoplasm. Essential cofactor of the RNA polymerase L that plays a central role in the transcription and replication by forming the polymerase complex with RNA polymerase L and recruiting L to the genomic N-RNA template for RNA synthesis. Also plays a central role in the encapsidation of nascent RNA chains by forming the encapsidation complex with the nucleocapsid protein N (N-P complex). Acts as a chaperone for newly synthesized free N protein, so-called N0, allowing encapsidation of nascent RNA chains during replication. The nucleoprotein protein N prevents excessive phosphorylation of P, which leads to down-regulation of viral transcription/ replication. Participates, together with N, in the formation of viral factories (viroplasms), which are large inclusions in the host cytoplasm where replication takes place. Recruits host PI4KB and remodel the host endoplasmic reticulum membrane to form viral replication factories. This chain is Phosphoprotein (P/V/C), found in Sendai virus (strain Ohita) (SeV).